The primary structure comprises 80 residues: MAKFCTTITLILVALVLFADFEAPTIVKAELCKRESETWSGRCVNDYQCRDHCINNDRGNDGYCAGGYPWYRSCFCFFSC.

The first 29 residues, 1 to 29 (MAKFCTTITLILVALVLFADFEAPTIVKA), serve as a signal peptide directing secretion. Cystine bridges form between cysteine 32/cysteine 80, cysteine 43/cysteine 64, cysteine 49/cysteine 74, and cysteine 53/cysteine 76.

This sequence belongs to the DEFL family.

The protein localises to the secreted. Confers broad-spectrum resistance to pathogens. This is Defensin-like protein 18 (PDF1.5) from Arabidopsis thaliana (Mouse-ear cress).